The sequence spans 25 residues: Growth-blocking peptide (25 aa).

Cys7 and Cys19 are oxidised to a cystine. Residue Gln25 is modified to Glutamine amide.

The protein belongs to the GBP/PSP1/paralytic peptide family. Hemolymph.

In terms of biological role, biogenic peptide that prevents, in lepidopteran, the onset of metamorphosis from larva to pupa. This growth-blocking peptide has repressive activity against juvenile hormone esterase. The protein is Growth-blocking peptide of Cotesia kariyai (Parasitic wasp).